Here is a 148-residue protein sequence, read N- to C-terminus: UPF0756 membrane protein YeaL (148 aa).

Transmembrane regions (helical) follow at residues 14–34 (ALGF…LIIV), 51–71 (LSIG…SGTL), 86–106 (LVAI…VTLM), and 121–141 (VLGV…AGLV).

The protein belongs to the UPF0756 family.

The protein resides in the cell membrane. The polypeptide is UPF0756 membrane protein YeaL (Shigella boydii serotype 18 (strain CDC 3083-94 / BS512)).